Here is an 843-residue protein sequence, read N- to C-terminus: Protein MEI2-like 2 (843 aa).

2 RRM domains span residues 198–271 and 283–356; these read RTLF…FSIP and GTLV…LSRP.

Its function is as follows. Probable RNA-binding protein that plays a role in meiosis and vegetative growth. This chain is Protein MEI2-like 2 (ML2), found in Arabidopsis thaliana (Mouse-ear cress).